Consider the following 185-residue polypeptide: Prenylated Rab acceptor protein 1 (185 aa).

At 1 to 78 (MAAQKDQQKD…RNVEYYQSNY (78 aa)) the chain is on the cytoplasmic side. The segment at 30-54 (AGREWLERRRATIRPWSTFVDQQRF) is required for interaction with prenylated RAB3A and VAMP2. 2 helical membrane passes run 79-94 (VFVF…VTSP) and 95-112 (MLLV…ILYL). Residues 113–131 (RTLESKLVLFGREVSPAHQ) are Cytoplasmic-facing. 2 helical membrane passes run 132 to 148 (YALA…LAGA) and 149 to 165 (GSAV…VIGS). The segment at 165–185 (SHAAFHQIEAVDGEELQMEPV) is required for interaction with GDI1. The Cytoplasmic segment spans residues 166–185 (HAAFHQIEAVDGEELQMEPV). Residues 175 to 185 (VDGEELQMEPV) form a required for interaction with prenylated RAB3A and VAMP2 region. The homodimerization stretch occupies residues 175 to 185 (VDGEELQMEPV).

This sequence belongs to the PRA1 family. Homodimer. Interacts with VAMP2 (synaptobrevin-2), GDI1, and PCLO. Interacts specifically with prenylated Rab proteins; strongly with RAB4B, RAB5A and RAB5C, and weakly with RAB4A, RAB6, RAB7A, RAB17 and RAB22. Interacts with NDRG1. In terms of tissue distribution, ubiquitous. Strongest expression found in placenta, pituitary gland, kidney, lung and stomach.

The protein resides in the cell membrane. Its subcellular location is the cytoplasm. It localises to the golgi apparatus. The protein localises to the cytoplasmic vesicle. It is found in the secretory vesicle. The protein resides in the synaptic vesicle. Its function is as follows. General Rab protein regulator required for vesicle formation from the Golgi complex. May control vesicle docking and fusion by mediating the action of Rab GTPases to the SNARE complexes. In addition it inhibits the removal of Rab GTPases from the membrane by GDI. The polypeptide is Prenylated Rab acceptor protein 1 (RABAC1) (Homo sapiens (Human)).